The following is a 587-amino-acid chain: Lipoprotein LpqB (587 aa).

The signal sequence occupies residues 1–19; sequence MERLMRLTILLFLGAVLAG. Residue cysteine 20 is the site of N-palmitoyl cysteine attachment. A lipid anchor (S-diacylglycerol cysteine) is attached at cysteine 20.

It belongs to the LpqB lipoprotein family. In terms of assembly, interacts with MtrB, probably extracytoplasmically.

It is found in the cell membrane. Its subcellular location is the secreted. The protein resides in the cell wall. Functionally, may modulate activity of the MtrAB system in controlling homeostasis of the cell wall and cell division. This is Lipoprotein LpqB from Mycobacterium tuberculosis (strain CDC 1551 / Oshkosh).